The chain runs to 37 residues: Potassium channel toxin alpha-KTx 4.8 (37 aa).

2 cysteine pairs are disulfide-bonded: C13-C33 and C17-C35.

Belongs to the short scorpion toxin superfamily. Potassium channel inhibitor family. Alpha-KTx 04 subfamily. As to expression, expressed by the venom gland.

The protein resides in the secreted. Reversible blocker of voltage-gated potassium channel Kv1.2/KCNA2 (Kd=65 nM) and calcium-activated potassium channels KCa2.2/KCNN2 (Kd=575 nM) and KCa3.1/KCNN4 (Kd=59 nM). This Centruroides margaritatus (Central American bark Scorpion) protein is Potassium channel toxin alpha-KTx 4.8.